The following is a 714-amino-acid chain: Interferon-induced GTP-binding protein Mx2 (714 aa).

The tract at residues 1 to 89 is disordered; sequence MSMSYRALKF…QRSKGSENNL (89 aa). Polar residues-rich tracts occupy residues 61 to 70 and 79 to 88; these read NNFNQLNLDP and QQRSKGSENN. The region spanning 115-386 is the Dynamin-type G domain; the sequence is DLALPAIAVI…LIWHINKSLP (272 aa). Positions 125 to 132 are G1 motif; sequence GDQSSGKS. 125-132 contacts GTP; the sequence is GDQSSGKS. The G2 motif stretch occupies residues 150–152; the sequence is ITR. Residues 224–227 are G3 motif; that stretch reads DLPG. GTP is bound by residues 224 to 228 and 293 to 296; these read DLPGI and TKPD. Positions 293–296 are G4 motif; that stretch reads TKPD. The G5 motif stretch occupies residues 325 to 328; it reads KCRG. Residues 622–713 form the GED domain; it reads IVEIGVHLNA…ALYEFPHFKS (92 aa).

The protein belongs to the TRAFAC class dynamin-like GTPase superfamily. Dynamin/Fzo/YdjA family.

The protein resides in the cytoplasm. The protein localises to the nucleus. In terms of biological role, interferon-induced dynamin-like GTPase with antiviral activity. This is Interferon-induced GTP-binding protein Mx2 (MX2) from Ovis aries (Sheep).